The chain runs to 997 residues: Burkholderia TALE-like protein 2 (997 aa).

One copy of the Cryptic repeat -1 repeat lies at 19-50 (LSPLERIKIEKHYGGGATLAFISNQHDELAQV). The stretch at 51–83 (LSRADILKIASYDCAAQALQAVLDCGPMLGKRG) is one Cryptic repeat 0 repeat. Core repeat repeat units follow at residues 84–116 (FSRADIVRIAGNGGGAQALYSVLDVEPTLGKRG), 117–147 (FSQVDVVKIAGGGAQALHTVLEIGPTLGERG), 148–180 (FSRGDIVTIAGNNGGAQALQAVLELEPTLRERG), 181–213 (FNQADIVKIAGNGGGAQALQAVLDVEPALGKRG), 214–244 (FSRVDIAKIAGGGAQALQAVLGLEPTLRKRG), 245–277 (FHPTDIIKIAGNNGGAQALQAVLDLELMLRERG), 278–310 (FSQADIVKMASNIGGAQALQAVLNLEPALCERG), 311–343 (FSQPDIVKMAGNSGGAQALQAVLDLELAFRERG), 344–376 (FSQADIVKMASNIGGAQALQAVLELEPALHERG), 377–409 (FSQANIVKMAGNSGGAQALQAVLDLELVFRERG), 410–442 (FSQPEIVEMAGNIGGAQALHTVLDLELAFRERG), 443–475 (VRQADIVKIVGNNGGAQALQAVFELEPTLRERG), 476–508 (FNQATIVKIAANGGGAQALYSVLDVEPTLDKRG), 509–539 (FSRVDIVKIAGGGAQALHTAFELEPTLRKRG), 540–572 (FNPTDIVKIAGNKGGAQALQAVLELEPALRERG), 573–605 (FNQATIVKMAGNAGGAQALYSVLDVEPALRERG), 606–638 (FSQPEIVKIAGNIGGAQALHTVLELEPTLHKRG), 639–671 (FNPTDIVKIAGNSGGAQALQAVLELEPAFRERG), 672–704 (FGQPDIVKMASNIGGAQALQAVLELEPALRERG), 705–737 (FSQPDIVEMAGNIGGAQALQAVLELEPAFRERG), 738–770 (FSQSDIVKIAGNIGGAQALQAVLELEPTLRESD), 771–803 (FRQADIVNIAGNDGSTQALKAVIEHGPRLRQRG), 804–836 (FNRASIVKIAGNSGGAQALQAVLKHGPTLDERG), 837–869 (FNLTNIVKIAGNGGGAQALKAVIEHGPTLQQRG), 870–902 (FNLTDIVEMAGKGGGAQALKAVLEHGPTLRQRG), 903–935 (FNLIDIVEMASNTGGAQALKTVLEHGPTLRQRD), and 936–967 (LSLIDIVEIASNGGAQALKAVLKYGPVLMQAG). Residues 84–967 (FSRADIVRIA…KYGPVLMQAG (884 aa)) form a buD domain region. 4 ANK repeats span residues 772 to 801 (RQADIVNIAGNDGSTQALKAVIEHGPRLRQ), 805 to 834 (NRASIVKIAGNSGGAQALQAVLKHGPTLDE), 838 to 867 (NLTNIVKIAGNGGGAQALKAVIEHGPTLQQ), and 871 to 900 (NLTDIVEMAGKGGGAQALKAVLEHGPTLRQ). A Cryptic repeat +1 repeat occupies 968–997 (RSNEEIVHVAARRGGAGRIRKMVALLLERQ).

Belongs to the transcription activator-like effector (TALE) family. Bat subfamily.

In terms of biological role, binds to DNA in a sequence-specific manner. This chain is Burkholderia TALE-like protein 2, found in Mycetohabitans rhizoxinica (strain DSM 19002 / CIP 109453 / HKI 454) (Paraburkholderia rhizoxinica).